A 250-amino-acid polypeptide reads, in one-letter code: Troponin I 1 (250 aa).

Disordered regions lie at residues Met1–Lys59 and Ser194–Glu250. Basic and acidic residues-rich tracts occupy residues Asp21–Gln45 and Asp206–Ser221. Acidic residues predominate over residues Pro229 to Glu250.

The protein belongs to the troponin I family. As to expression, strongly expressed in body wall muscle during embryogenesis, reduces during the larval stages to adult. In late-stage larvae and adults, expression is evident in the proximal gonad of both hermaphrodites and males.

Its function is as follows. Troponin I is the inhibitory subunit of troponin, the thin filament regulatory complex which confers calcium-sensitivity to muscle actomyosin ATPase activity. In Caenorhabditis elegans, this protein is Troponin I 1 (tni-1).